The following is a 421-amino-acid chain: UPF0229 protein lpl2726 (421 aa).

Positions 83–110 are disordered; it reads IAGDRIKRPGGGGSGGAGGNASDSGEGE. A compositionally biased stretch (gly residues) spans 91-101; that stretch reads PGGGGSGGAGG.

This sequence belongs to the UPF0229 family.

This Legionella pneumophila (strain Lens) protein is UPF0229 protein lpl2726.